Consider the following 389-residue polypeptide: Probable serine/threonine-protein kinase PBL24 (389 aa).

The interval 1–36 (MSCFLGPSTNNKSRENEGSSMAAPYEQQNLPRNDRR) is disordered. Residue Cys3 is the site of S-palmitoyl cysteine attachment. Positions 71–348 (FRQEFLIGEG…SDVVTALSFM (278 aa)) constitute a Protein kinase domain. Residues 77–85 (IGEGGFGRV) and Lys100 contribute to the ATP site. Asp198 (proton acceptor) is an active-site residue. Ser202 and Ser232 each carry phosphoserine. At Thr238 the chain carries Phosphothreonine. The residue at position 246 (Tyr246) is a Phosphotyrosine.

This sequence belongs to the protein kinase superfamily. Ser/Thr protein kinase family.

It is found in the cell membrane. It carries out the reaction L-seryl-[protein] + ATP = O-phospho-L-seryl-[protein] + ADP + H(+). It catalyses the reaction L-threonyl-[protein] + ATP = O-phospho-L-threonyl-[protein] + ADP + H(+). May be involved in plant defense signaling. The chain is Probable serine/threonine-protein kinase PBL24 from Arabidopsis thaliana (Mouse-ear cress).